The primary structure comprises 101 residues: Enhancer of yellow 2 transcription factor (101 aa).

The protein belongs to the ENY2 family. In terms of assembly, component of the nuclear pore complex (NPC)-associated AMEX complex (anchoring and mRNA export complex), composed of at least e(y)2 and xmas-2. Component of the SAGA transcription coactivator-HAT complexes, at least composed of Ada2b, e(y)2, Pcaf/Gcn5, Taf10 and Nipped-A/Trrap. Within the SAGA complex, e(y)2, Sgf11, and not/nonstop form an additional subcomplex of SAGA called the DUB module (deubiquitination module). Component of the THO complex, composed of at least e(y)2, HPR1, THO2, THOC5, THOC6 and THOC7. Interacts with e(y)1. Interacts with su(Hw) (via zinc fingers). Interacts with xmas-2; required for localization to the nuclear periphery. Interacts with the nuclear pore complex (NPC).

The protein resides in the nucleus. It localises to the nucleoplasm. It is found in the cytoplasm. Its function is as follows. Involved in mRNA export coupled transcription activation by association with both the AMEX and the SAGA complexes. The SAGA complex is a multiprotein complex that activates transcription by remodeling chromatin and mediating histone acetylation and deubiquitination. Within the SAGA complex, participates in a subcomplex that specifically deubiquitinates histone H2B. The SAGA complex is recruited to specific gene promoters by activators, where it is required for transcription. Required for nuclear receptor-mediated transactivation. Involved in transcription elongation by recruiting the THO complex onto nascent mRNA. The AMEX complex functions in docking export-competent ribonucleoprotein particles (mRNPs) to the nuclear entrance of the nuclear pore complex (nuclear basket). AMEX participates in mRNA export and accurate chromatin positioning in the nucleus by tethering genes to the nuclear periphery. This Drosophila yakuba (Fruit fly) protein is Enhancer of yellow 2 transcription factor.